The sequence spans 356 residues: Probable dual-specificity RNA methyltransferase RlmN (356 aa).

Glutamate 92 acts as the Proton acceptor in catalysis. The Radical SAM core domain maps to 98-336 (HKYGFSVCVT…CGVRLEHGTD (239 aa)). A disulfide bond links cysteine 105 and cysteine 341. Positions 112, 116, and 119 each coordinate [4Fe-4S] cluster. S-adenosyl-L-methionine is bound by residues 164–165 (GE), serine 196, 219–221 (SLH), and asparagine 297. Cysteine 341 (S-methylcysteine intermediate) is an active-site residue.

This sequence belongs to the radical SAM superfamily. RlmN family. [4Fe-4S] cluster is required as a cofactor.

It localises to the cytoplasm. It catalyses the reaction adenosine(2503) in 23S rRNA + 2 reduced [2Fe-2S]-[ferredoxin] + 2 S-adenosyl-L-methionine = 2-methyladenosine(2503) in 23S rRNA + 5'-deoxyadenosine + L-methionine + 2 oxidized [2Fe-2S]-[ferredoxin] + S-adenosyl-L-homocysteine. It carries out the reaction adenosine(37) in tRNA + 2 reduced [2Fe-2S]-[ferredoxin] + 2 S-adenosyl-L-methionine = 2-methyladenosine(37) in tRNA + 5'-deoxyadenosine + L-methionine + 2 oxidized [2Fe-2S]-[ferredoxin] + S-adenosyl-L-homocysteine. In terms of biological role, specifically methylates position 2 of adenine 2503 in 23S rRNA and position 2 of adenine 37 in tRNAs. This Shouchella clausii (strain KSM-K16) (Alkalihalobacillus clausii) protein is Probable dual-specificity RNA methyltransferase RlmN.